A 610-amino-acid polypeptide reads, in one-letter code: Cytosolic 5'-nucleotidase 1B (610 aa).

2 disordered regions span residues 1–34 (MSQT…DKTG) and 101–277 (GSQE…DEDD). Over residues 9-34 (KKNEPGMRSSKESLEAEKRKESDKTG) the composition is skewed to basic and acidic residues. Over residues 119–132 (SQWSRISRSPSTKA) the composition is skewed to polar residues. Over residues 148–166 (PSSSTSSRTPSTSPSLHDS) the composition is skewed to low complexity. The segment covering 167–183 (SPPPLSGQPSLQPPASP) has biased composition (pro residues). Residues 236-265 (SRTSPTEWKSSSQRRGIYPASTQLDRNSLS) show a composition bias toward polar residues. The active-site Nucleophile is the aspartate 467.

This sequence belongs to the 5'-nucleotidase type 3 family. Mg(2+) is required as a cofactor. As to expression, highly expressed in testis, placenta and pancreas. Detected at lower levels in heart, kidney, liver and lung.

Its subcellular location is the cytoplasm. It catalyses the reaction a ribonucleoside 5'-phosphate + H2O = a ribonucleoside + phosphate. It carries out the reaction AMP + H2O = adenosine + phosphate. With respect to regulation, activated by ADP. In terms of biological role, catalyzes the hydrolysis of nucleotide monophosphates, releasing inorganic phosphate and the corresponding nucleoside, AMP is the major substrate. This Homo sapiens (Human) protein is Cytosolic 5'-nucleotidase 1B (NT5C1B).